The following is a 252-amino-acid chain: Indole-3-glycerol phosphate synthase (252 aa).

The protein belongs to the TrpC family.

The enzyme catalyses 1-(2-carboxyphenylamino)-1-deoxy-D-ribulose 5-phosphate + H(+) = (1S,2R)-1-C-(indol-3-yl)glycerol 3-phosphate + CO2 + H2O. It participates in amino-acid biosynthesis; L-tryptophan biosynthesis; L-tryptophan from chorismate: step 4/5. The protein is Indole-3-glycerol phosphate synthase of Bacillus licheniformis (strain ATCC 14580 / DSM 13 / JCM 2505 / CCUG 7422 / NBRC 12200 / NCIMB 9375 / NCTC 10341 / NRRL NRS-1264 / Gibson 46).